The chain runs to 328 residues: Reticulocalbin-3 (328 aa).

The signal sequence occupies residues 1 to 20; the sequence is MMWRWTLMLLLLLLRHWALG. The interval 24–48 is disordered; sequence PDAGPHGQDRVHHGTPLSEAPHDDA. EF-hand domains are found at residues 75-112, 113-148, 163-198, 200-235, 241-276, and 277-312; these read ESQARLGRIVDRMDLAGDSDGWVSLAELRAWIAHTQQR, HIRDSVSAAWHTYDTDRDGRVGWEELRNATYGHYEP, KMLARDERRFRVADQDGDSMATREELTAFLHPEEFP, MRDIVVAETLEDLDKNKDGYVQVEEYIADLYSAEPG, WVQTERQQFRDFRDLNKDGRLDGSEVGYWVLPPSQD, and QPLVEANHLLHESDTDKDGRLSKAEILSNWNMFVGS. Ca(2+) contacts are provided by Asp-92, Asp-94, Trp-96, Glu-101, Asp-126, Asp-128, Asp-130, Arg-132, and Glu-137. N-linked (GlcNAc...) asparagine glycosylation is present at Asn-140. Positions 176, 178, 180, 182, 187, 213, 215, 217, 219, 224, 254, 256, 258, 260, 265, 290, 292, 294, 296, and 301 each coordinate Ca(2+). The Prevents secretion from ER signature appears at 325 to 328; the sequence is HDEL.

It belongs to the CREC family. Interacts with PCSK6 (immature form including the propeptide); probably involved in the maturation and the secretion of PCSK6. In terms of processing, N-glycosylated. Degraded by PCSK6 and other endoproteases including FURIN and PCSK5.

Its subcellular location is the endoplasmic reticulum lumen. Its function is as follows. Probable molecular chaperone assisting protein biosynthesis and transport in the endoplasmic reticulum. Required for the proper biosynthesis and transport of pulmonary surfactant-associated protein A/SP-A, pulmonary surfactant-associated protein D/SP-D and the lipid transporter ABCA3. By regulating both the proper expression and the degradation through the endoplasmic reticulum-associated protein degradation pathway of these proteins plays a crucial role in pulmonary surfactant homeostasis. Has an anti-fibrotic activity by negatively regulating the secretion of type I and type III collagens. This calcium-binding protein also transiently associates with immature PCSK6 and regulates its secretion. The polypeptide is Reticulocalbin-3 (Rattus norvegicus (Rat)).